The following is a 331-amino-acid chain: MTDILAVAREQVLVRGEGLDQDQTLQVLQLPDDRLDDLLALAHEVRMAWCGPDVEVEGIISLKTGGCPEDCHFCSQSGLFASPVRSAWLDIPSLVEAAKQTAKTGATEFCIVAAVRGPDERLLAQVAAGIEAIRNEVDIQIACSLGMLTQDQVERLSEMGVHRYNHNLETARSFFTNVVTTHSWEERWDTLQMVREAGMEVCCGGILGMGETLEQRAEFAANLAELDPHEVPLNFLNPRPGTPFGDLEVLPASEALKAVAAFRLALPRTMLRFAGGREITLGDLGAKQGILGGINAVIVGNYLTTLGRPAEADLQLLDDLQMPIKALNATL.

The 226-residue stretch at 52–277 folds into the Radical SAM core domain; that stretch reads PDVEVEGIIS…RTMLRFAGGR (226 aa). Residues Cys67, Cys71, and Cys74 each coordinate [4Fe-4S] cluster. Residues Cys110, Cys143, Cys202, and Arg272 each contribute to the [2Fe-2S] cluster site.

It belongs to the radical SAM superfamily. Biotin synthase family. In terms of assembly, homodimer. The cofactor is [4Fe-4S] cluster. [2Fe-2S] cluster is required as a cofactor.

It carries out the reaction (4R,5S)-dethiobiotin + (sulfur carrier)-SH + 2 reduced [2Fe-2S]-[ferredoxin] + 2 S-adenosyl-L-methionine = (sulfur carrier)-H + biotin + 2 5'-deoxyadenosine + 2 L-methionine + 2 oxidized [2Fe-2S]-[ferredoxin]. The protein operates within cofactor biosynthesis; biotin biosynthesis; biotin from 7,8-diaminononanoate: step 2/2. Functionally, catalyzes the conversion of dethiobiotin (DTB) to biotin by the insertion of a sulfur atom into dethiobiotin via a radical-based mechanism. This chain is Biotin synthase, found in Mycolicibacterium vanbaalenii (strain DSM 7251 / JCM 13017 / BCRC 16820 / KCTC 9966 / NRRL B-24157 / PYR-1) (Mycobacterium vanbaalenii).